A 353-amino-acid chain; its full sequence is Interferon-stimulated 20 kDa exonuclease-like 2 (353 aa).

Disordered stretches follow at residues 1-93 (MSTL…QPLD) and 125-172 (ALPK…SGAS). Over residues 14-23 (PPKKALEGNA) the composition is skewed to basic and acidic residues. Residues 24 to 35 (KHRNFVKKRRLL) are compositionally biased toward basic residues. The span at 54-63 (LHSEPSKKGE) shows a compositional bias: basic and acidic residues. The segment covering 135–151 (RSQKKSSQKKSSKKNHP) has biased composition (basic residues). Residues 152–172 (QKNAPQNSTQAHSENKCSGAS) show a composition bias toward polar residues. One can recognise an Exonuclease domain in the interval 178–353 (KMVAIDCEMV…EHLARNPPTD (176 aa)).

Its subcellular location is the nucleus. It localises to the nucleolus. Functionally, 3'-&gt; 5'-exoribonuclease involved in ribosome biogenesis in the processing of the 12S pre-rRNA. Displays a strong specificity for a 3'-end containing a free hydroxyl group. This chain is Interferon-stimulated 20 kDa exonuclease-like 2 (ISG20L2), found in Homo sapiens (Human).